Here is a 916-residue protein sequence, read N- to C-terminus: Isoleucine--tRNA ligase (916 aa).

A 'HIGH' region motif is present at residues 57–67 (PYANGNLHMGH). E554 provides a ligand contact to L-isoleucyl-5'-AMP. The 'KMSKS' region motif lies at 595–599 (KMSKS). K598 provides a ligand contact to ATP. 4 residues coordinate Zn(2+): C885, C888, C905, and C908.

This sequence belongs to the class-I aminoacyl-tRNA synthetase family. IleS type 1 subfamily. In terms of assembly, monomer. Requires Zn(2+) as cofactor.

The protein resides in the cytoplasm. It catalyses the reaction tRNA(Ile) + L-isoleucine + ATP = L-isoleucyl-tRNA(Ile) + AMP + diphosphate. Its function is as follows. Catalyzes the attachment of isoleucine to tRNA(Ile). As IleRS can inadvertently accommodate and process structurally similar amino acids such as valine, to avoid such errors it has two additional distinct tRNA(Ile)-dependent editing activities. One activity is designated as 'pretransfer' editing and involves the hydrolysis of activated Val-AMP. The other activity is designated 'posttransfer' editing and involves deacylation of mischarged Val-tRNA(Ile). The polypeptide is Isoleucine--tRNA ligase (Staphylococcus haemolyticus (strain JCSC1435)).